Here is a 166-residue protein sequence, read N- to C-terminus: Endoribonuclease YbeY (166 aa).

Positions 111, 115, and 121 each coordinate Zn(2+). The segment at 140 to 166 (ELGYPDPYADDESADPPHSDTPSKDHE) is disordered. The span at 154–166 (DPPHSDTPSKDHE) shows a compositional bias: basic and acidic residues.

The protein belongs to the endoribonuclease YbeY family. It depends on Zn(2+) as a cofactor.

Its subcellular location is the cytoplasm. Its function is as follows. Single strand-specific metallo-endoribonuclease involved in late-stage 70S ribosome quality control and in maturation of the 3' terminus of the 16S rRNA. This is Endoribonuclease YbeY from Pseudomonas syringae pv. syringae (strain B728a).